A 206-amino-acid chain; its full sequence is HTH-type transcriptional regulator Hpr (206 aa).

Residues 13-157 form the HTH marR-type domain; it reads ALLFSQRMAQ…MMSIIRHIYG (145 aa). Residues 63–86 constitute a DNA-binding region (H-T-H motif); it reads ISEIAKFGVMHVSTAFNFSKKLEE. Residues 177–206 form a disordered region; the sequence is SEEGKMKKKQEAKEAGESIEVDKPLEPLKN. A compositionally biased stretch (basic and acidic residues) spans 178 to 206; that stretch reads EEGKMKKKQEAKEAGESIEVDKPLEPLKN.

Homodimer.

Functionally, negative regulator of protease production and sporulation. The protein is HTH-type transcriptional regulator Hpr of Bacillus licheniformis (strain ATCC 14580 / DSM 13 / JCM 2505 / CCUG 7422 / NBRC 12200 / NCIMB 9375 / NCTC 10341 / NRRL NRS-1264 / Gibson 46).